A 213-amino-acid chain; its full sequence is Riboflavin synthase (213 aa).

Lumazine-binding repeat units follow at residues Met1–His97 and Leu98–Val195. 2,4-dihydroxypteridine contacts are provided by residues Gly4 to Val6, Cys48 to Thr50, Asp62 to Thr67, Gly101 to Ile103, Lys137, Ser146 to Thr148, and His160 to Thr165.

In terms of assembly, homotrimer. Unlike in B.subtilis, does not interact with 6,7-dimethyl-8-ribityllumazine synthase.

It catalyses the reaction 2 6,7-dimethyl-8-(1-D-ribityl)lumazine + H(+) = 5-amino-6-(D-ribitylamino)uracil + riboflavin. The protein operates within cofactor biosynthesis; riboflavin biosynthesis; riboflavin from 2-hydroxy-3-oxobutyl phosphate and 5-amino-6-(D-ribitylamino)uracil: step 2/2. Catalyzes the dismutation of two molecules of 6,7-dimethyl-8-ribityllumazine, resulting in the formation of riboflavin and 5-amino-6-(D-ribitylamino)uracil. The chain is Riboflavin synthase (ribC) from Escherichia coli (strain K12).